Reading from the N-terminus, the 143-residue chain is Small ribosomal subunit protein uS9 (143 aa).

The disordered stretch occupies residues 118 to 143 (DSRRTEPHKPNRSTKGPRAKRQKSYR). Residues 127–143 (PNRSTKGPRAKRQKSYR) show a composition bias toward basic residues.

It belongs to the universal ribosomal protein uS9 family.

This chain is Small ribosomal subunit protein uS9, found in Thermococcus sibiricus (strain DSM 12597 / MM 739).